A 154-amino-acid chain; its full sequence is Large-conductance mechanosensitive channel (154 aa).

3 helical membrane-spanning segments follow: residues 14 to 34 (VMDLAVGVVIGGAFGKIVTSL), 38 to 58 (IITPLIGLLLGKVDFSGLFIN), and 81 to 101 (GLFLNSVIDFVIIAFSIFIVI).

The protein belongs to the MscL family. Homopentamer.

It localises to the cell membrane. Its function is as follows. Channel that opens in response to stretch forces in the membrane lipid bilayer. May participate in the regulation of osmotic pressure changes within the cell. This is Large-conductance mechanosensitive channel from Brevibacillus brevis (strain 47 / JCM 6285 / NBRC 100599).